The sequence spans 243 residues: 7-cyano-7-deazaguanine synthase (243 aa).

18 to 28 (FSGGQDSATCL) is a binding site for ATP. 4 residues coordinate Zn(2+): Cys206, Cys221, Cys224, and Cys227.

This sequence belongs to the QueC family. Zn(2+) is required as a cofactor.

The enzyme catalyses 7-carboxy-7-deazaguanine + NH4(+) + ATP = 7-cyano-7-deazaguanine + ADP + phosphate + H2O + H(+). The protein operates within purine metabolism; 7-cyano-7-deazaguanine biosynthesis. Catalyzes the ATP-dependent conversion of 7-carboxy-7-deazaguanine (CDG) to 7-cyano-7-deazaguanine (preQ(0)). This is 7-cyano-7-deazaguanine synthase from Maricaulis maris (strain MCS10) (Caulobacter maris).